A 249-amino-acid polypeptide reads, in one-letter code: Methylthioribulose-1-phosphate dehydratase (249 aa).

Residues 1-25 (MVDIKPEQTQEGNNNDHLVQSDDPE) form a disordered region. The segment covering 9 to 18 (TQEGNNNDHL) has biased composition (polar residues). Position 105 (Cys-105) interacts with substrate. Zn(2+)-binding residues include His-122 and His-124. Glu-151 functions as the Proton donor/acceptor in the catalytic mechanism. His-207 is a binding site for Zn(2+).

The protein belongs to the aldolase class II family. MtnB subfamily. Zn(2+) is required as a cofactor.

It localises to the cytoplasm. The catalysed reaction is 5-(methylsulfanyl)-D-ribulose 1-phosphate = 5-methylsulfanyl-2,3-dioxopentyl phosphate + H2O. It functions in the pathway amino-acid biosynthesis; L-methionine biosynthesis via salvage pathway; L-methionine from S-methyl-5-thio-alpha-D-ribose 1-phosphate: step 2/6. Its function is as follows. Catalyzes the dehydration of methylthioribulose-1-phosphate (MTRu-1-P) into 2,3-diketo-5-methylthiopentyl-1-phosphate (DK-MTP-1-P). The sequence is that of Methylthioribulose-1-phosphate dehydratase from Arthroderma otae (strain ATCC MYA-4605 / CBS 113480) (Microsporum canis).